The chain runs to 127 residues: Auxin-responsive protein SAUR76 (127 aa).

Residues 20–40 form a disordered region; it reads SFNTKPNQPPAQTNHSRSSAV.

It belongs to the ARG7 family. In terms of tissue distribution, expressed in cotyledons, hypocotyls and roots of young seedlings. Expressed in emerging lateral root, leaves, flowers, stamens and filaments.

Its subcellular location is the nucleus. The protein resides in the cytoplasm. It localises to the cell membrane. Functionally, may be involved in the regulation of ethylene receptor signaling. Promotes cell expansion and plant growth. Involved in the regulation of cell elongation. The sequence is that of Auxin-responsive protein SAUR76 from Arabidopsis thaliana (Mouse-ear cress).